A 949-amino-acid chain; its full sequence is Glycine dehydrogenase (decarboxylating) (949 aa).

Lysine 700 carries the N6-(pyridoxal phosphate)lysine modification.

The protein belongs to the GcvP family. The glycine cleavage system is composed of four proteins: P, T, L and H. Pyridoxal 5'-phosphate serves as cofactor.

The catalysed reaction is N(6)-[(R)-lipoyl]-L-lysyl-[glycine-cleavage complex H protein] + glycine + H(+) = N(6)-[(R)-S(8)-aminomethyldihydrolipoyl]-L-lysyl-[glycine-cleavage complex H protein] + CO2. Functionally, the glycine cleavage system catalyzes the degradation of glycine. The P protein binds the alpha-amino group of glycine through its pyridoxal phosphate cofactor; CO(2) is released and the remaining methylamine moiety is then transferred to the lipoamide cofactor of the H protein. This chain is Glycine dehydrogenase (decarboxylating), found in Christiangramia forsetii (strain DSM 17595 / CGMCC 1.15422 / KT0803) (Gramella forsetii).